A 418-amino-acid polypeptide reads, in one-letter code: MIFDKGNVEDFDKELWDAIHAEEERQEHHIELIASENMVSKAVMAAQGSVLTNKYAEGYPGNRYYGGTECVDIVETLAIERAKKLFGAAFANVQAHSGSQANAAAYMALIEAGDTVLGMDLAAGGHLTHGSPVNFSGKTYHFVGYSVDADTEMLNYEAILEQAKAVQPKLIVAGASAYSRSIDFEKFRAIADHVGAYLMVDMAHIAGLVAAGVHPSPVPYAHIVTSTTHKTLRGPRGGLILTNDEALAKKINSAVFPGLQGGPLEHVIAAKAVAFKEALDPAFKDYAQAIIDNTAAMAAVFAQDDRFRLISGGTDNHVFLVDVTKVIANGKLAQNLLDEVNITLNKNAIPFETLSPFKTSGIRIGCAAITSRGMGVKESQTIARLIIKALVNHNQETILEEVRQEVRQLTDAFPLYKK.

Residues Leu121 and 125–127 (GHL) each bind (6S)-5,6,7,8-tetrahydrofolate. N6-(pyridoxal phosphate)lysine is present on Lys230. Residue 355–357 (SPF) participates in (6S)-5,6,7,8-tetrahydrofolate binding.

It belongs to the SHMT family. Homodimer. Requires pyridoxal 5'-phosphate as cofactor.

The protein resides in the cytoplasm. It carries out the reaction (6R)-5,10-methylene-5,6,7,8-tetrahydrofolate + glycine + H2O = (6S)-5,6,7,8-tetrahydrofolate + L-serine. It functions in the pathway one-carbon metabolism; tetrahydrofolate interconversion. Its pathway is amino-acid biosynthesis; glycine biosynthesis; glycine from L-serine: step 1/1. Its function is as follows. Catalyzes the reversible interconversion of serine and glycine with tetrahydrofolate (THF) serving as the one-carbon carrier. This reaction serves as the major source of one-carbon groups required for the biosynthesis of purines, thymidylate, methionine, and other important biomolecules. Also exhibits THF-independent aldolase activity toward beta-hydroxyamino acids, producing glycine and aldehydes, via a retro-aldol mechanism. This is Serine hydroxymethyltransferase from Streptococcus pyogenes serotype M18 (strain MGAS8232).